Reading from the N-terminus, the 202-residue chain is Probable nicotinate-nucleotide adenylyltransferase (202 aa).

The protein belongs to the NadD family.

It catalyses the reaction nicotinate beta-D-ribonucleotide + ATP + H(+) = deamido-NAD(+) + diphosphate. Its pathway is cofactor biosynthesis; NAD(+) biosynthesis; deamido-NAD(+) from nicotinate D-ribonucleotide: step 1/1. Functionally, catalyzes the reversible adenylation of nicotinate mononucleotide (NaMN) to nicotinic acid adenine dinucleotide (NaAD). This chain is Probable nicotinate-nucleotide adenylyltransferase, found in Synechococcus sp. (strain JA-2-3B'a(2-13)) (Cyanobacteria bacterium Yellowstone B-Prime).